The chain runs to 369 residues: Protein RIC-3 (369 aa).

An N-terminal signal peptide occupies residues 1 to 28; that stretch reads MAYSTVQRVALASGLVLALSLLLPKAFL. Over 29–95 the chain is Lumenal; that stretch reads SRGKRQEPPP…AGGGGSGRGL (67 aa). A disordered region spans residues 30 to 67; it reads RGKRQEPPPTPEGKLGRFPPMMHHHQAPSDGQTPGARF. Residues 96 to 116 form a helical membrane-spanning segment; the sequence is MGQIIPIYGFGIFLYILYILF. The Cytoplasmic portion of the chain corresponds to 117–369; that stretch reads KLSKGKTTAE…LRKRNPQGLE (253 aa). Residues 140–169 adopt a coiled-coil conformation; the sequence is RKITSFELAQLQEKLKETEAAMEKLINRVG. K202 carries the post-translational modification N6-acetyllysine; alternate. A Glycyl lysine isopeptide (Lys-Gly) (interchain with G-Cter in ubiquitin); alternate cross-link involves residue K202. Disordered regions lie at residues 272 to 295 and 316 to 369; these read ESDHLGWESLPTDPRAQEDNSVTS and LAEN…QGLE. Residues 332–346 are compositionally biased toward basic and acidic residues; it reads ETTKEEWSQDFKDEG. Over residues 360–369 the composition is skewed to basic residues; the sequence is LRKRNPQGLE.

This sequence belongs to the ric-3 family. As to quaternary structure, monomer and homodimer. Interacts with CHRNA7, CHRNA3, CHRNA4, CHRNB2, CHRNB4 and HTR3A. Broadly expressed, with high levels in muscle, brain, heart, pancreas and testis. In the central nervous system, highest levels are detected in the cerebellum and pituitary gland. Over-expressed in brains from patients with bipolar disease or schizophrenia. Isoform 5 is predominantly expressed in the brain.

It localises to the endoplasmic reticulum membrane. The protein resides in the golgi apparatus membrane. In terms of biological role, molecular chaperone which facilitates proper subunit assembly and surface trafficking of alpha-7 (CHRNA7) and alpha-8 (CHRNA8) nicotinic acetylcholine receptors. May also promote functional expression of homomeric serotoninergic 5-HT3 receptors, and of heteromeric acetylcholine receptors alpha-3/beta-2, alpha-3/beta-4, alpha-4/beta-2 and alpha-4/beta-4. The sequence is that of Protein RIC-3 (RIC3) from Homo sapiens (Human).